The sequence spans 550 residues: 65-kDa microtubule-associated protein 5 (550 aa).

2 coiled-coil regions span residues 46 to 174 and 288 to 310; these read NKKV…QKVN and IREA…KELV. Residues 471–531 form a disordered region; the sequence is QFREQKRLQG…PGRSVTSGGK (61 aa). The span at 502 to 511 shows a compositional bias: polar residues; the sequence is QSLNTDNVTK.

This sequence belongs to the MAP65/ASE1 family. Forms a dimer. Binds to MT, mostly with coaligned MT, both between parallel or antiparallel, forming thick bundles. Bundles polymerized MT via the formation of 25-nm crossbridges with cortical MT.

The protein resides in the nucleus. The protein localises to the cytoplasm. It is found in the cytoskeleton. It localises to the spindle. Its subcellular location is the phragmoplast. The protein resides in the cell cortex. The protein localises to the cell junction. It is found in the plasmodesma. Functionally, microtubule-associated protein that bundle and stabilize adjacent microtubules (MT) of the cell cortex. Confers MT resistance to the drug oryzalin. Promotes the formation of a planar network of antiparallel microtubules. The protein is 65-kDa microtubule-associated protein 5 (MAP65-5) of Arabidopsis thaliana (Mouse-ear cress).